The chain runs to 266 residues: Exosome complex component Rrp42 (266 aa).

It belongs to the RNase PH family. Rrp42 subfamily. In terms of assembly, component of the archaeal exosome complex. Forms a hexameric ring-like arrangement composed of 3 Rrp41-Rrp42 heterodimers. The hexameric ring associates with a trimer of Rrp4 and/or Csl4 subunits.

The protein resides in the cytoplasm. Functionally, non-catalytic component of the exosome, which is a complex involved in RNA degradation. Contributes to the structuring of the Rrp41 active site. The sequence is that of Exosome complex component Rrp42 from Methanosarcina acetivorans (strain ATCC 35395 / DSM 2834 / JCM 12185 / C2A).